The following is a 262-amino-acid chain: Flap endonuclease Xni (262 aa).

Residue aspartate 105 participates in Mg(2+) binding. The 5'-3' exonuclease domain occupies 162–254; sequence ERSQFLDLMA…LKDFRVIDSL (93 aa). 5 residues coordinate K(+): leucine 172, alanine 173, proline 181, isoleucine 183, and isoleucine 186. Positions 185–190 are interaction with DNA; that stretch reads GIGPKS.

Belongs to the Xni family. It depends on Mg(2+) as a cofactor. K(+) serves as cofactor.

Has flap endonuclease activity. During DNA replication, flap endonucleases cleave the 5'-overhanging flap structure that is generated by displacement synthesis when DNA polymerase encounters the 5'-end of a downstream Okazaki fragment. The chain is Flap endonuclease Xni from Shewanella baltica (strain OS195).